Reading from the N-terminus, the 300-residue chain is Sodium/potassium/calcium exchanger 1 (300 aa).

The segment at 1-251 is disordered; that stretch reads DPGSQGVGAE…ENEQPLSLEW (251 aa). Acidic residues-rich tracts occupy residues 92-102, 109-119, 126-136, 158-175, and 215-244; these read GEVEGDEDEGE, GEVE…DEGE, and GDSE…EENE. Residues 259-275 traverse the membrane as a helical segment; the sequence is AIYLFLLPIVFPLWLTV.

It belongs to the Ca(2+):cation antiporter (CaCA) (TC 2.A.19) family. SLC24A subfamily. The uncleaved signal sequence is required for efficient membrane targeting and proper membrane integration and topology.

Its subcellular location is the cell membrane. The enzyme catalyses Ca(2+)(out) + K(+)(out) + 4 Na(+)(in) = Ca(2+)(in) + K(+)(in) + 4 Na(+)(out). In terms of biological role, calcium, potassium:sodium antiporter that transports 1 Ca(2+) and 1 K(+) in exchange for 4 Na(+). Critical component of the visual transduction cascade, controlling the calcium concentration of outer segments during light and darkness. Light causes a rapid lowering of cytosolic free calcium in the outer segment of both retinal rod and cone photoreceptors and the light-induced lowering of calcium is caused by extrusion via this protein which plays a key role in the process of light adaptation. In Bison bison (American bison), this protein is Sodium/potassium/calcium exchanger 1 (SLC24A1).